Consider the following 275-residue polypeptide: T-cell ecto-ADP-ribosyltransferase 1 (275 aa).

The signal sequence occupies residues 1-20; that stretch reads MPSNICKFFLTWWLIQQVTG. 2 disulfides stabilise this stretch: C41–C243 and C141–C193. An N-linked (GlcNAc...) asparagine glycan is attached at N58. The TR mART core domain maps to 61-238; sequence EKLKVAWEEA…IFLDSPKRKK (178 aa). Residues Y98, R146, and Q164 each contribute to the NAD(+) site. R146 is a catalytic residue. S167 is an active-site residue. S202 contributes to the NAD(+) binding site. The active site involves E209. S246 carries the GPI-anchor amidated serine lipid modification. Positions 247–275 are cleaved as a propeptide — removed in mature form; that stretch reads SAGTRESCVSLFLVVLTSLLVQLLCLAEP.

It belongs to the Arg-specific ADP-ribosyltransferase family. In terms of tissue distribution, postthymic T-cells.

Its subcellular location is the cell membrane. The catalysed reaction is L-arginyl-[protein] + NAD(+) = N(omega)-(ADP-D-ribosyl)-L-arginyl-[protein] + nicotinamide + H(+). The enzyme catalyses NAD(+) + H2O = ADP-D-ribose + nicotinamide + H(+). Its function is as follows. Has NAD(+) glycohydrolase activity and extremely low ADP-ribosyltransferase activity. In Rattus norvegicus (Rat), this protein is T-cell ecto-ADP-ribosyltransferase 1 (Art2a).